A 435-amino-acid polypeptide reads, in one-letter code: Methylenetetrahydrofolate--tRNA-(uracil-5-)-methyltransferase TrmFO (435 aa).

10–15 serves as a coordination point for FAD; sequence GAGLAG.

Belongs to the MnmG family. TrmFO subfamily. FAD serves as cofactor.

The protein localises to the cytoplasm. It catalyses the reaction uridine(54) in tRNA + (6R)-5,10-methylene-5,6,7,8-tetrahydrofolate + NADH + H(+) = 5-methyluridine(54) in tRNA + (6S)-5,6,7,8-tetrahydrofolate + NAD(+). The enzyme catalyses uridine(54) in tRNA + (6R)-5,10-methylene-5,6,7,8-tetrahydrofolate + NADPH + H(+) = 5-methyluridine(54) in tRNA + (6S)-5,6,7,8-tetrahydrofolate + NADP(+). Functionally, catalyzes the folate-dependent formation of 5-methyl-uridine at position 54 (M-5-U54) in all tRNAs. This is Methylenetetrahydrofolate--tRNA-(uracil-5-)-methyltransferase TrmFO from Halalkalibacterium halodurans (strain ATCC BAA-125 / DSM 18197 / FERM 7344 / JCM 9153 / C-125) (Bacillus halodurans).